Reading from the N-terminus, the 332-residue chain is MSTTNILLLCGGGGDEHAISLLSANYFETSLATLPQFNVLRVELDVNGHYRTAAGESCELNSRRQIRFDADNRAPWEVDFAIPCIHGFPGETGDIQSYFELINLPYFGCKAEASRNCFNKITAKMWFSALNIPNTPYLFLNEMSDVSIEQATNALVNWGSIFVKAASQGSSVGCYRIDNQEDVASTLAQAFTYSDYVIVEKTISARELEVAVYEIDGEIVATVPGEVICSSNNFYTFDEKYAANSKAQTQVVADISKEVSDLIRQYAISAFKGMKLRHLSRIDFFLTDDGEVLLNEINTFPGLTPISMFPKMLQNHGHSFPDYLLSNINSTD.

Positions 124–329 (KMWFSALNIP…FPDYLLSNIN (206 aa)) constitute an ATP-grasp domain. Position 154-209 (154-209 (ALVNWGSIFVKAASQGSSVGCYRIDNQEDVASTLAQAFTYSDYVIVEKTISARELE)) interacts with ATP. Mg(2+) contacts are provided by Asp283, Glu296, and Asn298.

The protein belongs to the D-alanine--D-alanine ligase family. Mg(2+) is required as a cofactor. Requires Mn(2+) as cofactor.

The protein resides in the cytoplasm. It catalyses the reaction 2 D-alanine + ATP = D-alanyl-D-alanine + ADP + phosphate + H(+). Its pathway is cell wall biogenesis; peptidoglycan biosynthesis. In terms of biological role, cell wall formation. This Shewanella piezotolerans (strain WP3 / JCM 13877) protein is D-alanine--D-alanine ligase.